A 118-amino-acid polypeptide reads, in one-letter code: uncharacterized protein (118 aa).

Residues 41 to 61 form a helical membrane-spanning segment; the sequence is IFLLIIITIIFALTMYTSVQV.

The protein localises to the host membrane. This is an uncharacterized protein from Ostreid herpesvirus 1 (isolate France) (OsHV-1).